The primary structure comprises 470 residues: UDP-N-acetylmuramate--L-alanine ligase (470 aa).

118–124 (GTHGKTT) contributes to the ATP binding site.

It belongs to the MurCDEF family.

It is found in the cytoplasm. The catalysed reaction is UDP-N-acetyl-alpha-D-muramate + L-alanine + ATP = UDP-N-acetyl-alpha-D-muramoyl-L-alanine + ADP + phosphate + H(+). It participates in cell wall biogenesis; peptidoglycan biosynthesis. Functionally, cell wall formation. The chain is UDP-N-acetylmuramate--L-alanine ligase from Cereibacter sphaeroides (strain KD131 / KCTC 12085) (Rhodobacter sphaeroides).